A 126-amino-acid chain; its full sequence is Protein FMP49, mitochondrial (126 aa).

The protein localises to the mitochondrion. The polypeptide is Protein FMP49, mitochondrial (Saccharomyces cerevisiae (strain ATCC 204508 / S288c) (Baker's yeast)).